A 354-amino-acid chain; its full sequence is UDP-N-acetylglucosamine--N-acetylmuramyl-(pentapeptide) pyrophosphoryl-undecaprenol N-acetylglucosamine transferase (354 aa).

UDP-N-acetyl-alpha-D-glucosamine is bound by residues 15–17 (TGG), Asn127, Arg163, Ser191, Ile244, 263–268 (ALTVSE), and Gln288.

This sequence belongs to the glycosyltransferase 28 family. MurG subfamily.

It is found in the cell inner membrane. The catalysed reaction is di-trans,octa-cis-undecaprenyl diphospho-N-acetyl-alpha-D-muramoyl-L-alanyl-D-glutamyl-meso-2,6-diaminopimeloyl-D-alanyl-D-alanine + UDP-N-acetyl-alpha-D-glucosamine = di-trans,octa-cis-undecaprenyl diphospho-[N-acetyl-alpha-D-glucosaminyl-(1-&gt;4)]-N-acetyl-alpha-D-muramoyl-L-alanyl-D-glutamyl-meso-2,6-diaminopimeloyl-D-alanyl-D-alanine + UDP + H(+). It functions in the pathway cell wall biogenesis; peptidoglycan biosynthesis. Functionally, cell wall formation. Catalyzes the transfer of a GlcNAc subunit on undecaprenyl-pyrophosphoryl-MurNAc-pentapeptide (lipid intermediate I) to form undecaprenyl-pyrophosphoryl-MurNAc-(pentapeptide)GlcNAc (lipid intermediate II). This chain is UDP-N-acetylglucosamine--N-acetylmuramyl-(pentapeptide) pyrophosphoryl-undecaprenol N-acetylglucosamine transferase, found in Vibrio cholerae serotype O1 (strain ATCC 39541 / Classical Ogawa 395 / O395).